A 476-amino-acid chain; its full sequence is Ribosomal RNA small subunit methyltransferase F (476 aa).

Residues 125-131, glutamate 149, aspartate 176, and aspartate 194 contribute to the S-adenosyl-L-methionine site; that span reads AAAPGSK. Cysteine 247 serves as the catalytic Nucleophile.

Belongs to the class I-like SAM-binding methyltransferase superfamily. RsmB/NOP family.

It localises to the cytoplasm. The enzyme catalyses cytidine(1407) in 16S rRNA + S-adenosyl-L-methionine = 5-methylcytidine(1407) in 16S rRNA + S-adenosyl-L-homocysteine + H(+). Its function is as follows. Specifically methylates the cytosine at position 1407 (m5C1407) of 16S rRNA. This is Ribosomal RNA small subunit methyltransferase F from Aeromonas salmonicida (strain A449).